Here is a 132-residue protein sequence, read N- to C-terminus: Small ribosomal subunit protein uS8 (132 aa).

It belongs to the universal ribosomal protein uS8 family. Part of the 30S ribosomal subunit. Contacts proteins S5 and S12.

One of the primary rRNA binding proteins, it binds directly to 16S rRNA central domain where it helps coordinate assembly of the platform of the 30S subunit. This Mycoplasmopsis pulmonis (strain UAB CTIP) (Mycoplasma pulmonis) protein is Small ribosomal subunit protein uS8.